Here is a 138-residue protein sequence, read N- to C-terminus: Large ribosomal subunit protein uL16 (138 aa).

The protein belongs to the universal ribosomal protein uL16 family. Part of the 50S ribosomal subunit.

In terms of biological role, binds 23S rRNA and is also seen to make contacts with the A and possibly P site tRNAs. The chain is Large ribosomal subunit protein uL16 from Mycoplasmoides gallisepticum (strain R(low / passage 15 / clone 2)) (Mycoplasma gallisepticum).